Here is a 117-residue protein sequence, read N- to C-terminus: Large ribosomal subunit protein bL19 (117 aa).

The protein belongs to the bacterial ribosomal protein bL19 family.

Functionally, this protein is located at the 30S-50S ribosomal subunit interface and may play a role in the structure and function of the aminoacyl-tRNA binding site. The sequence is that of Large ribosomal subunit protein bL19 from Exiguobacterium sibiricum (strain DSM 17290 / CCUG 55495 / CIP 109462 / JCM 13490 / 255-15).